Consider the following 482-residue polypeptide: Glucose starvation modulator protein 1 (482 aa).

Residues 20-48 (CVFCHEKHLQCDVGRPCQNCEKRNIGESC) constitute a DNA-binding region (zn(2)-C6 fungal-type). Positions 350–422 (LLEYENMSKM…KLFNEYLAFS (73 aa)) constitute a PAS domain.

Belongs to the ERT1/acuK family.

It localises to the nucleus. In terms of biological role, transcription factor which regulates nonfermentable carbon utilization. The sequence is that of Glucose starvation modulator protein 1 (GSM1) from Eremothecium gossypii (strain ATCC 10895 / CBS 109.51 / FGSC 9923 / NRRL Y-1056) (Yeast).